The primary structure comprises 515 residues: Iroquois-class homeodomain protein IRX-4 (515 aa).

The segment at residues 144–205 is a DNA-binding region (homeobox; TALE-type); it reads GTRRKNATRE…NARRRLKKEN (62 aa). Disordered regions lie at residues 205–258, 278–307, and 398–425; these read NKMT…ELEL, TPFQ…STTL, and GPTG…RHQD. Positions 214–223 are enriched in basic and acidic residues; sequence KCADEKRPYG. Residues 224–236 are compositionally biased toward acidic residues; the sequence is EGEEEEAGEEESR. The segment covering 237 to 257 has biased composition (basic and acidic residues); the sequence is EEPLKSAKSEGHAGKDDKELE. Over residues 399-419 the composition is skewed to low complexity; sequence PTGVSATTPASSPAVTAPSGA.

It belongs to the TALE/IRO homeobox family. Interacts with the vitamin D receptor VDR but doesn't affect its transactivation activity. As to expression, expressed in the developing central nervous system, skin, and vibrissae, but predominantly expressed in the cardiac ventricles of the developing heart. Not expressed in the developing metanephric kidney or adult kidney.

It localises to the nucleus. Its function is as follows. Likely to be an important mediator of ventricular differentiation during cardiac development. The protein is Iroquois-class homeodomain protein IRX-4 (Irx4) of Mus musculus (Mouse).